The following is a 169-amino-acid chain: Crossover junction endodeoxyribonuclease RuvC (169 aa).

Catalysis depends on residues Asp11, Glu71, and Asp143. Positions 11, 71, and 143 each coordinate Mg(2+).

It belongs to the RuvC family. As to quaternary structure, homodimer which binds Holliday junction (HJ) DNA. The HJ becomes 2-fold symmetrical on binding to RuvC with unstacked arms; it has a different conformation from HJ DNA in complex with RuvA. In the full resolvosome a probable DNA-RuvA(4)-RuvB(12)-RuvC(2) complex forms which resolves the HJ. It depends on Mg(2+) as a cofactor.

It localises to the cytoplasm. The enzyme catalyses Endonucleolytic cleavage at a junction such as a reciprocal single-stranded crossover between two homologous DNA duplexes (Holliday junction).. In terms of biological role, the RuvA-RuvB-RuvC complex processes Holliday junction (HJ) DNA during genetic recombination and DNA repair. Endonuclease that resolves HJ intermediates. Cleaves cruciform DNA by making single-stranded nicks across the HJ at symmetrical positions within the homologous arms, yielding a 5'-phosphate and a 3'-hydroxyl group; requires a central core of homology in the junction. The consensus cleavage sequence is 5'-(A/T)TT(C/G)-3'. Cleavage occurs on the 3'-side of the TT dinucleotide at the point of strand exchange. HJ branch migration catalyzed by RuvA-RuvB allows RuvC to scan DNA until it finds its consensus sequence, where it cleaves and resolves the cruciform DNA. The protein is Crossover junction endodeoxyribonuclease RuvC of Bartonella quintana (strain Toulouse) (Rochalimaea quintana).